Here is a 201-residue protein sequence, read N- to C-terminus: Translation initiation factor IF-3 (201 aa).

The segment at 167–201 (PHRGAKTRARARHPGEPAGGPPPKPTAGDSKAAPN) is disordered. Residues 169-178 (RGAKTRARAR) are compositionally biased toward basic residues.

This sequence belongs to the IF-3 family. Monomer.

The protein resides in the cytoplasm. In terms of biological role, IF-3 binds to the 30S ribosomal subunit and shifts the equilibrium between 70S ribosomes and their 50S and 30S subunits in favor of the free subunits, thus enhancing the availability of 30S subunits on which protein synthesis initiation begins. This chain is Translation initiation factor IF-3, found in Mycobacterium bovis (strain ATCC BAA-935 / AF2122/97).